A 215-amino-acid chain; its full sequence is 3-isopropylmalate dehydratase small subunit (215 aa).

Belongs to the LeuD family. LeuD type 1 subfamily. As to quaternary structure, heterodimer of LeuC and LeuD.

It catalyses the reaction (2R,3S)-3-isopropylmalate = (2S)-2-isopropylmalate. It functions in the pathway amino-acid biosynthesis; L-leucine biosynthesis; L-leucine from 3-methyl-2-oxobutanoate: step 2/4. In terms of biological role, catalyzes the isomerization between 2-isopropylmalate and 3-isopropylmalate, via the formation of 2-isopropylmaleate. The chain is 3-isopropylmalate dehydratase small subunit from Xanthomonas euvesicatoria pv. vesicatoria (strain 85-10) (Xanthomonas campestris pv. vesicatoria).